The chain runs to 421 residues: Serine hydroxymethyltransferase (421 aa).

(6S)-5,6,7,8-tetrahydrofolate contacts are provided by residues leucine 121 and 125-127; that span reads GHL. Position 229 is an N6-(pyridoxal phosphate)lysine (lysine 229).

This sequence belongs to the SHMT family. In terms of assembly, homodimer. Requires pyridoxal 5'-phosphate as cofactor.

The protein resides in the cytoplasm. The enzyme catalyses (6R)-5,10-methylene-5,6,7,8-tetrahydrofolate + glycine + H2O = (6S)-5,6,7,8-tetrahydrofolate + L-serine. It functions in the pathway one-carbon metabolism; tetrahydrofolate interconversion. It participates in amino-acid biosynthesis; glycine biosynthesis; glycine from L-serine: step 1/1. Its function is as follows. Catalyzes the reversible interconversion of serine and glycine with tetrahydrofolate (THF) serving as the one-carbon carrier. This reaction serves as the major source of one-carbon groups required for the biosynthesis of purines, thymidylate, methionine, and other important biomolecules. Also exhibits THF-independent aldolase activity toward beta-hydroxyamino acids, producing glycine and aldehydes, via a retro-aldol mechanism. This Haemophilus influenzae (strain PittEE) protein is Serine hydroxymethyltransferase.